Here is a 244-residue protein sequence, read N- to C-terminus: Uridylate kinase (244 aa).

Residue 15–18 (KLSG) coordinates ATP. Residues 23–28 (GSEGFG) form an involved in allosteric activation by GTP region. Residue Gly-57 participates in UMP binding. ATP is bound by residues Gly-58 and Arg-62. Residues Asp-77 and 138–145 (TGNPFFTT) contribute to the UMP site. 3 residues coordinate ATP: Thr-165, Phe-171, and Asp-174.

It belongs to the UMP kinase family. As to quaternary structure, homohexamer.

The protein resides in the cytoplasm. The enzyme catalyses UMP + ATP = UDP + ADP. It participates in pyrimidine metabolism; CTP biosynthesis via de novo pathway; UDP from UMP (UMPK route): step 1/1. Allosterically activated by GTP. Inhibited by UTP. Its function is as follows. Catalyzes the reversible phosphorylation of UMP to UDP. In Aeromonas salmonicida (strain A449), this protein is Uridylate kinase.